Here is a 451-residue protein sequence, read N- to C-terminus: Heme sensor protein HssS (451 aa).

2 consecutive transmembrane segments (helical) span residues 9-29 and 164-184; these read IAIYAITVILFSALMSFLFTN and IFLAVLITLLLIISISLVIAS. One can recognise an HAMP domain in the interval 186 to 238; the sequence is YSIIKPVTALKNATTRIMKGDFSTPIKQTRHDEIGTLQSRFNTMRQNLGQVDQ. One can recognise a Histidine kinase domain in the interval 246-451; sequence NVSHEVKTPL…KTQFIVKLFI (206 aa). The residue at position 249 (His249) is a Phosphohistidine; by autocatalysis.

Autophosphorylated.

The protein resides in the cell membrane. The catalysed reaction is ATP + protein L-histidine = ADP + protein N-phospho-L-histidine.. In terms of biological role, member of the two-component regulatory system HssS/HssR involved in intracellular heme homeostasis and tempering of staphylococcal virulence. HssS functions as a heme sensor histidine kinase which is autophosphorylated at a histidine residue and transfers its phosphate group to an aspartate residue of HssR. HssR/HssS activates the expression of HrtAB, an efflux pump, in response to extracellular heme, hemin, hemoglobin or blood. The sequence is that of Heme sensor protein HssS (hssS) from Staphylococcus epidermidis (strain ATCC 35984 / DSM 28319 / BCRC 17069 / CCUG 31568 / BM 3577 / RP62A).